The chain runs to 373 residues: Caspase-4 (373 aa).

Positions 1–59 (MAENKHPDKPLKVLEQLGKEVLTEYLEKLVQSNVLKLKEEDKQKFNNAERSDKRWVFVD) are required for LPS-binding. Residues 1–80 (MAENKHPDKP…MLLQTFFSVD (80 aa)) constitute a propeptide that is removed on maturation. One can recognise a CARD domain in the interval 1-91 (MAENKHPDKP…GSHHGEANLE (91 aa)). At serine 83 the chain carries Phosphoserine. Catalysis depends on residues histidine 206 and cysteine 254. Positions 267–285 (SSKPQLCRGVDLPRNMEAD) are excised as a propeptide. Arginine 310 carries the post-translational modification (Microbial infection) ADP-riboxanated arginine.

Belongs to the peptidase C14A family. In terms of assembly, heterotetramer that consists of two anti-parallel arranged heterodimers, each one formed by a 20 kDa (Caspase-4 subunit p20) and a 10 kDa (Caspase-4 subunit p10) subunit. Upon direct LPS-binding, forms large homooligomers, resulting in its activation. These oligomers are often referred to as 'non-canonical inflammasomes'. In its precursor form, interacts with TMEM214; this interaction is required for association with the endoplasmic reticulum membrane. Interacts with CASP1. Interacts with NOD2. Interacts with Serpinb1a, Serpinb1b and Serpinb1c; these interactions regulate CASP4 activity. Heterotetramer that consists of two anti-parallel arranged heterodimers, each one formed by a 20 kDa (Caspase-4 subunit p20) and a 10 kDa (Caspase-4 subunit p10) subunit. In terms of processing, in response to activation signals, undergoes autoproteolytic cleavage and activation. (Microbial infection) ADP-riboxanation by S.flexneri OspC3 blocks CASP4 autoprocessing, preventing CASP4 activation and ability to recognize and cleave GSDMD, thereby thwarting the inflammasome/pyroptosis-mediated defense. Widely expressed, including in thymus, lung and spleen (at protein level). Very low levels, if any, in the brain.

Its subcellular location is the cytoplasm. It localises to the cytosol. It is found in the endoplasmic reticulum membrane. The protein resides in the mitochondrion. The protein localises to the inflammasome. Its subcellular location is the secreted. The catalysed reaction is Strict requirement for Asp at the P1 position and has a preferred cleavage sequence of (Ile/Leu/Val/Phe)-Gly-His-Asp-|-.. Its activity is regulated as follows. Activated by homooligomerization induced by direct binding to cytosolic LPS, in a TLR4-independent manner. In addition to LPS, CASP4/CASP11 may also be activated by oxidized phospholipid 1-palmitoyl-2-arachidonoyl- sn-glycero-3-phosphorylcholine, an oxidized phospholipid (oxPAPC), in dendritic cells, promoting adaptive immunity. The role of oxPAPC is however unclear and another report suggests that oxPAPC competes with LPS-binding and inhibits the non-canonical inflammasome in macrophages. Functionally, inflammatory caspase that acts as the effector of the non-canonical inflammasome by mediating lipopolysaccharide (LPS)-induced pyroptosis. Also indirectly activates the NLRP3 and NLRP6 inflammasomes. Acts as a thiol protease that cleaves a tetrapeptide after an Asp residue at position P1: catalyzes cleavage of CGAS and GSDMD. In contrast to its human ortholog, does not cleave IL18. Effector of the non-canonical inflammasome independently of NLRP3 inflammasome and CASP1: the non-canonical inflammasome promotes pyroptosis through GSDMD cleavage without involving secretion of cytokine IL1B and IL18. In the non-canonical inflammasome, CASP4/CASP11 is activated by direct binding to the lipid A moiety of LPS without the need of an upstream sensor. LPS-binding promotes CASP4/CASP11 activation and CASP4/CASP11-mediated cleavage of GSDMD, followed by pyroptosis of infected cells and their extrusion into the gut lumen. Also indirectly promotes secretion of mature cytokines (IL1A, IL18 and HMGB1) downstream of GSDMD-mediated pyroptosis via activation of the NLRP3 and NLRP6 inflammasomes. Involved in NLRP3-dependent CASP1 activation and IL1B and IL18 secretion in response to non-canonical activators, such as UVB radiation or cholera enterotoxin. Involved in NLRP6 inflammasome-dependent activation in response to lipoteichoic acid (LTA), a cell-wall component of Gram-positive bacteria, which leads to CASP1 activation and IL1B and IL18 secretion. Involved in LPS-induced IL6 secretion; this activity may not require caspase enzymatic activity. The non-canonical inflammasome is required for innate immunity to cytosolic, but not vacuolar, bacteria. Plays a crucial role in the restriction of S.typhimurium replication in colonic epithelial cells during infection. Activation of the non-canonical inflammasome in brain endothelial cells can lead to excessive pyroptosis, leading to blood-brain barrier breakdown. Pyroptosis limits bacterial replication, while cytokine secretion promotes the recruitment and activation of immune cells and triggers mucosal inflammation. May also act as an activator of adaptive immunity in dendritic cells, following activation by oxidized phospholipid 1-palmitoyl-2-arachidonoyl- sn-glycero-3-phosphorylcholine, an oxidized phospholipid (oxPAPC). Cleavage of GSDMD is not strictly dependent on the consensus cleavage site but depends on an exosite interface on CASP4/CASP11 that recognizes and binds the Gasdermin-D, C-terminal (GSDMD-CT) part. In contrast, it does not directly process IL1B. During non-canonical inflammasome activation, cuts CGAS and may play a role in the regulation of antiviral innate immune activation. The chain is Caspase-4 from Mus musculus (Mouse).